We begin with the raw amino-acid sequence, 562 residues long: MKPHSVFADSLWPSIDLLYDYAPFLQQSMVDGHIGFFPTGITPPRVAIIGAGISGLIAATELLRAGVRDITLFEARDRLGGRAWSQLFDPHYYPRLIAEMGAMRFPPSATGLFHYLNRFSIQTSASFPDPGIVDTELHYRGVRHLWPAGEQPPALFTRVHNGWRALLYEGCLLDGVSLVGPLQITAMLKSERFDEAAEAWQIWLNVFRDCSFYSAMVTIFTGTNPPGGIAWERRDDFELFGALGIGSGGFLPVYQAGFTEILRMVINGYEDDQRLIIGGISTLAEQLARQEIRGTTPGRHVRFSKVNRISKDNGKISLATDVKPVDAFDRVIVTSNNRAMQMVHGLSADETFLNQDVCRAVRETHLTGSSKLFMLTRDKFWLKNKLPLTIQSDGLVRGVYVLDYESDNPEGRGVVLLSYTWEDDAHKLLAITDKKQRGQHLVDELSAIHPEFARYLVPAGADYERYVLHHDWLTDPCSAGAFKLNYPGEDVYSQRLFFQFKTANHPEQDSGLLLAGCGCSFTGGWVEGAVQTAVNSACAVIRSTGGTLYGNPLDSVHSIYDY.

Ser54, Glu74, Arg76, Arg82, and Arg104 together coordinate FMN. Arg104 contributes to the substrate binding site.

This sequence belongs to the tryptophan 2-monooxygenase family. Requires FMN as cofactor.

It carries out the reaction L-tryptophan + O2 = indole-3-acetamide + CO2 + H2O. The protein operates within plant hormone metabolism; auxin biosynthesis. This chain is Tryptophan 2-monooxygenase (iaaM), found in Pantoea agglomerans pv. gypsophilae (Erwinia herbicola).